A 503-amino-acid chain; its full sequence is Glucosaminyl-phosphatidylinositol-acyltransferase PIGW (503 aa).

The Lumenal segment spans residues 1–21; it reads MSQKQLKEAFVRNLSGTSVLE. A glycan (N-linked (GlcNAc...) asparagine) is linked at N13. A helical membrane pass occupies residues 22–42; sequence VTQGLCFPAFCILCRGLWIIF. Residues 43-48 are Cytoplasmic-facing; the sequence is SQHVCS. A helical transmembrane segment spans residues 49–71; it reads FSNTWSTRFLMDFVVLIVPLVIT. The Lumenal segment spans residues 72–74; the sequence is LTV. The helical transmembrane segment at 75 to 97 threads the bilayer; that stretch reads LSSFILLENLTVIVWGAWLLYQI. At 98–131 the chain is on the cytoplasmic side; sequence YHRRTCYAKVPVQKVFANFLKISLESEYNPAITC. Residues 132 to 152 form a helical membrane-spanning segment; the sequence is YRVINSVFTAIAILAVDFPLF. At 153 to 160 the chain is on the lumenal side; sequence PRRFAKTE. A helical membrane pass occupies residues 161–181; that stretch reads LYGTGAMDFGVGGFIFGAAMV. Over 182-201 the chain is Cytoplasmic; the sequence is CPEVRRKSIEESRFNYLRKS. Residues 202–222 traverse the membrane as a helical segment; it reads LYSVWPLVFLGMGRLVIIKSI. Topologically, residues 223-236 are lumenal; sequence GYQEHSTEYGIHWN. A helical membrane pass occupies residues 237–257; the sequence is FFFTIIVVRLVTSLLLIIFPL. Topologically, residues 258–259 are cytoplasmic; it reads NK. A helical membrane pass occupies residues 260 to 280; the sequence is SWIVAVSITVVYQLALDYTPL. Residues 281 to 304 lie on the Lumenal side of the membrane; the sequence is KRILLYGTDGSGTRVGFLNANREG. Residues 305 to 325 form a helical membrane-spanning segment; the sequence is IISTLGYVTIHMAGVQTGLYV. Residues 326-339 lie on the Cytoplasmic side of the membrane; it reads LKGRAQVRDWIKAT. A helical transmembrane segment spans residues 340-360; it reads CWVFSVAVGFFISLHIVQVNI. Residues 361–380 are Lumenal-facing; that stretch reads EAVSRRMANLAFCLWVVASS. The chain crosses the membrane as a helical span at residues 381–401; the sequence is LMLLSCLLLSGIILSFAQFLI. Residues 402–447 are Cytoplasmic-facing; it reads KGSLVPCSWKLIQSPTTHKNHSESLILEAEKNQPSLCLITALNRNQ. A Phosphoserine modification is found at S415. A helical membrane pass occupies residues 448 to 468; it reads LFFFLLSNITTGLINLTMDTL. Over 469–472 the chain is Lumenal; the sequence is HTGA. A helical transmembrane segment spans residues 473 to 493; it reads LWTLVVLSIYMFTNCLVIYVL. Residues 494–503 lie on the Cytoplasmic side of the membrane; it reads DLQGKTIKFW.

This sequence belongs to the PIGW family.

It is found in the endoplasmic reticulum membrane. Its pathway is glycolipid biosynthesis; glycosylphosphatidylinositol-anchor biosynthesis. Its function is as follows. Acyltransferase that catalyzes the acyl transfer from an acyl-CoA at the 2-OH position of the inositol ring of glucosaminyl phosphatidylinositol (GlcN-PI) to generate GlcN-(acyl)PI and participates in the fourth step of GPI-anchor biosynthesi. Required for the transport of GPI-anchored proteins to the plasma membrane. Acetylation during GPI-anchor biosynthesis is not essential for the subsequent mannosylation and is usually removed soon after the attachment of GPIs to proteins. The chain is Glucosaminyl-phosphatidylinositol-acyltransferase PIGW from Mus musculus (Mouse).